Consider the following 133-residue polypeptide: Small ribosomal subunit protein uS8 (133 aa).

It belongs to the universal ribosomal protein uS8 family. As to quaternary structure, part of the 30S ribosomal subunit. Contacts proteins S5 and S12.

Its function is as follows. One of the primary rRNA binding proteins, it binds directly to 16S rRNA central domain where it helps coordinate assembly of the platform of the 30S subunit. This Prochlorococcus marinus (strain MIT 9515) protein is Small ribosomal subunit protein uS8.